We begin with the raw amino-acid sequence, 287 residues long: Diaminopimelate epimerase (287 aa).

The substrate site is built by N11, Q44, and N64. C73 serves as the catalytic Proton donor. Substrate is bound by residues 74 to 75 (GN), N157, N190, and 208 to 209 (ER). Residue C217 is the Proton acceptor of the active site. 218–219 (GT) is a binding site for substrate.

Belongs to the diaminopimelate epimerase family. As to quaternary structure, homodimer.

It is found in the cytoplasm. The enzyme catalyses (2S,6S)-2,6-diaminopimelate = meso-2,6-diaminopimelate. The protein operates within amino-acid biosynthesis; L-lysine biosynthesis via DAP pathway; DL-2,6-diaminopimelate from LL-2,6-diaminopimelate: step 1/1. Functionally, catalyzes the stereoinversion of LL-2,6-diaminopimelate (L,L-DAP) to meso-diaminopimelate (meso-DAP), a precursor of L-lysine and an essential component of the bacterial peptidoglycan. This is Diaminopimelate epimerase from Halorhodospira halophila (strain DSM 244 / SL1) (Ectothiorhodospira halophila (strain DSM 244 / SL1)).